The sequence spans 340 residues: DNA-directed RNA polymerase subunit alpha (340 aa).

The alpha N-terminal domain (alpha-NTD) stretch occupies residues 1 to 236; the sequence is MLSLSKNWNT…EQLQLFISFE (236 aa). Residues 251–340 are alpha C-terminal domain (alpha-CTD); it reads FSPYLLKRVD…LSKRYEDSYN (90 aa).

Belongs to the RNA polymerase alpha chain family. As to quaternary structure, homodimer. The RNAP catalytic core consists of 2 alpha, 1 beta, 1 beta' and 1 omega subunit. When a sigma factor is associated with the core the holoenzyme is formed, which can initiate transcription.

The enzyme catalyses RNA(n) + a ribonucleoside 5'-triphosphate = RNA(n+1) + diphosphate. In terms of biological role, DNA-dependent RNA polymerase catalyzes the transcription of DNA into RNA using the four ribonucleoside triphosphates as substrates. The chain is DNA-directed RNA polymerase subunit alpha from Rickettsia akari (strain Hartford).